A 300-amino-acid chain; its full sequence is Ribosomal protein L11 methyltransferase (300 aa).

The S-adenosyl-L-methionine site is built by T152, G173, D195, and N234.

It belongs to the methyltransferase superfamily. PrmA family.

It localises to the cytoplasm. It catalyses the reaction L-lysyl-[protein] + 3 S-adenosyl-L-methionine = N(6),N(6),N(6)-trimethyl-L-lysyl-[protein] + 3 S-adenosyl-L-homocysteine + 3 H(+). In terms of biological role, methylates ribosomal protein L11. The sequence is that of Ribosomal protein L11 methyltransferase from Paraburkholderia xenovorans (strain LB400).